The following is a 203-amino-acid chain: CASP-like protein 1B1 (203 aa).

The Cytoplasmic portion of the chain corresponds to 1-24 (MALVNAEKPEVGSSPSSLGPRNKS). Residues 25-45 (WVLLMLRFVAFLATAAATIVM) traverse the membrane as a helical segment. At 46 to 76 (AANRETKTFVVATIGSTPIKATVTAKFQHTP) the chain is on the extracellular side. The chain crosses the membrane as a helical span at residues 77–97 (AFVFFVIANGMGSIHNLVMIA). Residues 98-114 (GDTFVRKFDYKGLRWVT) are Cytoplasmic-facing. A helical membrane pass occupies residues 115-135 (VAILDMLTAALISGGVNAAVF). Residues 136 to 165 (MAELGKNGNSHAKWNKICDRFGSFCDHGGA) are Extracellular-facing. A helical transmembrane segment spans residues 166–186 (AIIASFIGLLLMLVISIISII). At 187–203 (KLLKPKSPLVDSHVLAP) the chain is on the cytoplasmic side.

It belongs to the Casparian strip membrane proteins (CASP) family. Homodimer and heterodimers.

The protein localises to the cell membrane. The polypeptide is CASP-like protein 1B1 (Ricinus communis (Castor bean)).